The sequence spans 175 residues: Interferon gamma (175 aa).

Residues Met1–Cys23 form the signal peptide. A Pyrrolidone carboxylic acid modification is found at Gln24. Residues Asn39 and Asn106 are each glycosylated (N-linked (GlcNAc...) asparagine).

Belongs to the type II (or gamma) interferon family. As to quaternary structure, homodimer. Interacts with IFNGR1 (via extracellular domain); this interaction promotes IFNGR1 dimerization. Released primarily from activated T lymphocytes.

It localises to the secreted. Its function is as follows. Type II interferon produced by immune cells such as T-cells and NK cells that plays crucial roles in antimicrobial, antiviral, and antitumor responses by activating effector immune cells and enhancing antigen presentation. Primarily signals through the JAK-STAT pathway after interaction with its receptor IFNGR1 to affect gene regulation. Upon IFNG binding, IFNGR1 intracellular domain opens out to allow association of downstream signaling components JAK2, JAK1 and STAT1, leading to STAT1 activation, nuclear translocation and transcription of IFNG-regulated genes. Many of the induced genes are transcription factors such as IRF1 that are able to further drive regulation of a next wave of transcription. Plays a role in class I antigen presentation pathway by inducing a replacement of catalytic proteasome subunits with immunoproteasome subunits. In turn, increases the quantity, quality, and repertoire of peptides for class I MHC loading. Increases the efficiency of peptide generation also by inducing the expression of activator PA28 that associates with the proteasome and alters its proteolytic cleavage preference. Up-regulates as well MHC II complexes on the cell surface by promoting expression of several key molecules such as cathepsins B/CTSB, H/CTSH, and L/CTSL. Participates in the regulation of hematopoietic stem cells during development and under homeostatic conditions by affecting their development, quiescence, and differentiation. The protein is Interferon gamma (IFNG) of Peromyscus maniculatus (North American deer mouse).